Consider the following 1461-residue polypeptide: Neogenin (1461 aa).

A signal peptide spans 1 to 33 (MAAERGARRLLSTPSFWLYCLLLLGRRAPGAAA). Topologically, residues 34–1105 (ARSGSAPQSP…PTSPLDSNML (1072 aa)) are extracellular. 4 Ig-like C2-type domains span residues 52-141 (PFYF…TIIS), 152-238 (PRFT…VELK), 243-336 (PEVI…AELT), and 341-426 (PEFL…AQLI). Residue Asn-73 is glycosylated (N-linked (GlcNAc...) asparagine). 3 disulfides stabilise this stretch: Cys-74-Cys-129, Cys-173-Cys-221, and Cys-270-Cys-320. Asn-210 is a glycosylation site (N-linked (GlcNAc...) asparagine). The N-linked (GlcNAc...) asparagine glycan is linked to Asn-326. Cysteines 362 and 410 form a disulfide. 6 Fibronectin type-III domains span residues 441–535 (APRD…TQPE), 541–631 (PAPN…TLSD), 636–731 (APQN…TFES), 741–831 (VPSS…RPHT), 856–952 (PPVG…TFEL), and 957–1054 (PPKD…TPKA). Residues Asn-470 and Asn-489 are each glycosylated (N-linked (GlcNAc...) asparagine). Residues Asn-639 and Asn-715 are each glycosylated (N-linked (GlcNAc...) asparagine). Residue Asn-909 is glycosylated (N-linked (GlcNAc...) asparagine). Residues 1041–1097 (GPMSEAVQFRTPKADSSDKMPNDQASGSGGKGSRLPDLGSDYKPPMSGSNSPHGSPT) form a disordered region. Over residues 1052 to 1061 (PKADSSDKMP) the composition is skewed to basic and acidic residues. Over residues 1087 to 1097 (SGSNSPHGSPT) the composition is skewed to polar residues. The helical transmembrane segment at 1106–1126 (LVIIVSVGVITIVVVVIIAVF) threads the bilayer. The Cytoplasmic portion of the chain corresponds to 1127 to 1461 (CTRRTTSHQK…MKDLNAITTA (335 aa)). 4 disordered regions span residues 1138–1160 (KRAA…DVKP), 1174–1206 (PIDK…SMDS), 1235–1276 (PKMM…PARS), and 1289–1381 (TSMS…ALPS). Residues Ser-1178 and Ser-1194 each carry the phosphoserine modification. A compositionally biased stretch (polar residues) spans 1191–1206 (PRNSQDITPVDNSMDS). The residue at position 1198 (Thr-1198) is a Phosphothreonine. 2 stretches are compositionally biased toward polar residues: residues 1289-1322 (TSMS…TCCT) and 1330-1349 (ATSS…QSLP). The span at 1366 to 1375 (AIPPPGPPTY) shows a compositional bias: pro residues. Ser-1401 is subject to Phosphoserine. Residue Thr-1404 is modified to Phosphothreonine. Phosphoserine occurs at positions 1432, 1434, and 1435.

This sequence belongs to the immunoglobulin superfamily. DCC family. Interacts with MYO10. Interacts with RGMA and RGMB. Interacts with BMP2, BMP4, BMP6, and BMP7. Widely expressed and also in cancer cell lines.

The protein resides in the cell membrane. In terms of biological role, multi-functional cell surface receptor regulating cell adhesion in many diverse developmental processes, including neural tube and mammary gland formation, myogenesis and angiogenesis. Receptor for members of the BMP, netrin, and repulsive guidance molecule (RGM) families. Netrin-Neogenin interactions result in a chemoattractive axon guidance response and cell-cell adhesion, the interaction between NEO1/Neogenin and RGMa and RGMb induces a chemorepulsive response. This Homo sapiens (Human) protein is Neogenin (NEO1).